Consider the following 450-residue polypeptide: Phosphoglucosamine mutase (450 aa).

The active-site Phosphoserine intermediate is the S104. Positions 104, 241, 243, and 245 each coordinate Mg(2+). S104 is modified (phosphoserine).

The protein belongs to the phosphohexose mutase family. It depends on Mg(2+) as a cofactor. Activated by phosphorylation.

The enzyme catalyses alpha-D-glucosamine 1-phosphate = D-glucosamine 6-phosphate. In terms of biological role, catalyzes the conversion of glucosamine-6-phosphate to glucosamine-1-phosphate. The sequence is that of Phosphoglucosamine mutase from Renibacterium salmoninarum (strain ATCC 33209 / DSM 20767 / JCM 11484 / NBRC 15589 / NCIMB 2235).